We begin with the raw amino-acid sequence, 938 residues long: MAEAKTTRLNKVLREFNISLDRAVEYLTSKGYEIDARPTTKISGEIYEVLSDEFETDKSKKVASKEVGEERKKEKEELRKEIEEKRKADEEKKEEAVSSRAKLEGPKTVGKIDLDKKPGEKSKEKEAEAPKEKEKEKETPAKEPVKKAEESKPTEKPAEKVEEKEDKPKEEKKAEPKKEEAKPQEAKAEKTKSEEPKSEETKSEETTEGGESEEKESDRIETKYTKLNGPNFTGKKIDLSQFKKPVKKKEEKKEDDKKDKDRRKKRRRRISKDVKGGGGNNQRGGAKKGGRTRSKPITKEEPTEEEVQKQVRETLEKLQGKSSKGKGAKYRRQKRDEHRQRSADDLAQQESDDKILKVTEFVTVSEVATMMDVQVTQIISACMSLGMMVTMNQRLDAETLTIVAEEFDYEVEFTTADVEETVEEVEENPEDLVTRAPIVTVMGHVDHGKTSLLDYVRKENVIAGESGGITQHIGAYGVKLEGGQKIAFLDTPGHEAFTAMRARGAQVTDIAIIVIAADDDVMPQTKEAISHAQAAGVPIIFAINKSDLPTANPEKIKEKLAAMNLLVEDWGGKIQSHDISAKTGAGVKELLEKVLLEAEILELKANPKKLAKGTVVEAFLDKGRGYIATILVQAGTLKIGDYVLAGRNSGKIKAMHDERGHEVKEAGPSTPVSILGLDGAPQAGDTFKVMEDEREAKDIAARRTQLQREQNVRTQRHITLDEIGRRIALGDFKELNIILKGDVDGSVEALTDSFQKLSTEEIQVNIIHKGVGAITESDVLLASASDAVIIGFNVRPAGNARQVADKEEIDIRTYSIIYDAINDLKDAMEGMLSPELKEEITGTAEIRETFKISKIGTIAGCMVTSGTIYRSAGVRLIRDGVVVYTGELSSLKRFKDDVREVKKGYDCGMQVKNYNDIREGDVIEAFREVEVKKTLKSK.

The span at 57 to 205 (DKSKKVASKE…PKSEETKSEE (149 aa)) shows a compositional bias: basic and acidic residues. The interval 57-350 (DKSKKVASKE…RSADDLAQQE (294 aa)) is disordered. Residues 206–215 (TTEGGESEEK) are compositionally biased toward acidic residues. Residues 248–259 (KKEEKKEDDKKD) show a composition bias toward basic and acidic residues. 2 stretches are compositionally biased toward basic residues: residues 260–270 (KDRRKKRRRRI) and 285–296 (GAKKGGRTRSKP). Positions 297–319 (ITKEEPTEEEVQKQVRETLEKLQ) are enriched in basic and acidic residues. Basic residues predominate over residues 323–333 (SKGKGAKYRRQ). Over residues 334 to 344 (KRDEHRQRSAD) the composition is skewed to basic and acidic residues. Positions 434 to 602 (TRAPIVTVMG…KVLLEAEILE (169 aa)) constitute a tr-type G domain. Residues 443–450 (GHVDHGKT) form a G1 region. 443 to 450 (GHVDHGKT) contacts GTP. The tract at residues 468–472 (GITQH) is G2. A G3 region spans residues 490–493 (DTPG). Residues 490-494 (DTPGH) and 544-547 (NKSD) each bind GTP. Positions 544–547 (NKSD) are G4. Residues 580 to 582 (SAK) are G5.

It belongs to the TRAFAC class translation factor GTPase superfamily. Classic translation factor GTPase family. IF-2 subfamily.

It localises to the cytoplasm. Its function is as follows. One of the essential components for the initiation of protein synthesis. Protects formylmethionyl-tRNA from spontaneous hydrolysis and promotes its binding to the 30S ribosomal subunits. Also involved in the hydrolysis of GTP during the formation of the 70S ribosomal complex. This Christiangramia forsetii (strain DSM 17595 / CGMCC 1.15422 / KT0803) (Gramella forsetii) protein is Translation initiation factor IF-2.